A 402-amino-acid polypeptide reads, in one-letter code: Putative PDZ domain-containing protein PDZK1P1 (402 aa).

2 consecutive PDZ domains span residues 12-93 and 121-206; these read RLCY…VDKE and IVEM…VDKE. A disordered region spans residues 230–258; that stretch reads GSVKEAPAPTPTSLEVSSPPDTTEEEDHK. Residues 240 to 250 are compositionally biased toward polar residues; sequence PTSLEVSSPPD. The PDZ 3 domain occupies 261–341; it reads LCRLAKGENG…NVTLLVCGKK (81 aa). The disordered stretch occupies residues 362-402; it reads DTPPDSKEGIVVESKHDSHMAKERAHSTASHSSSNSEDTEM. A compositionally biased stretch (basic and acidic residues) spans 365–387; the sequence is PDSKEGIVVESKHDSHMAKERAH. A compositionally biased stretch (low complexity) spans 388–402; that stretch reads STASHSSSNSEDTEM.

Belongs to the NHER family.

This chain is Putative PDZ domain-containing protein PDZK1P1, found in Homo sapiens (Human).